Reading from the N-terminus, the 153-residue chain is Aspartate carbamoyltransferase regulatory chain (153 aa).

Zn(2+)-binding residues include Cys109, Cys114, Cys138, and Cys141.

Belongs to the PyrI family. Contains catalytic and regulatory chains. Requires Zn(2+) as cofactor.

Involved in allosteric regulation of aspartate carbamoyltransferase. In Enterobacter sp. (strain 638), this protein is Aspartate carbamoyltransferase regulatory chain.